The sequence spans 548 residues: Splicing factor U2af large subunit B (548 aa).

Basic and acidic residues predominate over residues 1 to 82 (MADDHAAAAD…DRDRDRDKDR (82 aa)). The segment at 1–156 (MADDHAAAAD…SKRVSGFDMA (156 aa)) is disordered. The span at 83–93 (DRHHRHHRERR) shows a compositional bias: basic residues. Residues 94–120 (EHRDRSDDHDRHRSRDSERRRDHERDG) show a composition bias toward basic and acidic residues. The span at 121 to 149 (RRRHRSRSRSRSRGRDRRSRSRSRSKSKR) shows a compositional bias: basic residues. RRM domains lie at 214 to 297 (RRVY…RPTD), 334 to 412 (DRIF…RANQ), and 453 to 539 (QVVS…YPEN).

The protein belongs to the splicing factor SR family.

It is found in the nucleus. In terms of biological role, necessary for the splicing of pre-mRNA. This is Splicing factor U2af large subunit B (U2AF65B) from Oryza sativa subsp. japonica (Rice).